The sequence spans 397 residues: 1-deoxy-D-xylulose 5-phosphate reductoisomerase (397 aa).

T10, G11, S12, I13, N38, and N125 together coordinate NADPH. Residue K126 coordinates 1-deoxy-D-xylulose 5-phosphate. E127 contacts NADPH. Residue D151 coordinates Mn(2+). 4 residues coordinate 1-deoxy-D-xylulose 5-phosphate: S152, E153, S187, and H210. E153 contacts Mn(2+). G216 contributes to the NADPH binding site. Residues S223, N228, K229, and E232 each coordinate 1-deoxy-D-xylulose 5-phosphate. A Mn(2+)-binding site is contributed by E232.

This sequence belongs to the DXR family. In terms of assembly, homodimer. Mg(2+) serves as cofactor. Mn(2+) is required as a cofactor.

The enzyme catalyses 2-C-methyl-D-erythritol 4-phosphate + NADP(+) = 1-deoxy-D-xylulose 5-phosphate + NADPH + H(+). The protein operates within isoprenoid biosynthesis; isopentenyl diphosphate biosynthesis via DXP pathway; isopentenyl diphosphate from 1-deoxy-D-xylulose 5-phosphate: step 1/6. In terms of biological role, catalyzes the NADPH-dependent rearrangement and reduction of 1-deoxy-D-xylulose-5-phosphate (DXP) to 2-C-methyl-D-erythritol 4-phosphate (MEP). The protein is 1-deoxy-D-xylulose 5-phosphate reductoisomerase of Blochmanniella pennsylvanica (strain BPEN).